A 173-amino-acid chain; its full sequence is MGNASHFALFDLEPDFRLDQDRLAVRYRELVRRVHPDRFAGAPEREQRLALEEAARLNEAYQTLKSPSQRARYLLSLQGEELSQETTVQDPAFLMQQMELREELQELQDSADLAGVARFKRRLVQDQEQLNEGFAACWADPRRRDEAERLARRMQFLDKLFAEVRQLEERLDD.

The region spanning 5–77 is the J domain; the sequence is SHFALFDLEP…SQRARYLLSL (73 aa).

This sequence belongs to the HscB family. In terms of assembly, interacts with HscA and stimulates its ATPase activity.

In terms of biological role, co-chaperone involved in the maturation of iron-sulfur cluster-containing proteins. Seems to help targeting proteins to be folded toward HscA. The sequence is that of Co-chaperone protein HscB homolog from Azotobacter vinelandii (strain DJ / ATCC BAA-1303).